The chain runs to 348 residues: Protein RecA (348 aa).

Residue 64–71 participates in ATP binding; it reads GPESSGKT. A compositionally biased stretch (basic and acidic residues) spans 325 to 335; that stretch reads YEIDGANKEPL. The tract at residues 325 to 348 is disordered; sequence YEIDGANKEPLEETEETLSLLDDE. Positions 336–348 are enriched in acidic residues; sequence EETEETLSLLDDE.

This sequence belongs to the RecA family.

The protein resides in the cytoplasm. Its function is as follows. Can catalyze the hydrolysis of ATP in the presence of single-stranded DNA, the ATP-dependent uptake of single-stranded DNA by duplex DNA, and the ATP-dependent hybridization of homologous single-stranded DNAs. It interacts with LexA causing its activation and leading to its autocatalytic cleavage. The protein is Protein RecA of Listeria welshimeri serovar 6b (strain ATCC 35897 / DSM 20650 / CCUG 15529 / CIP 8149 / NCTC 11857 / SLCC 5334 / V8).